A 120-amino-acid chain; its full sequence is Large ribosomal subunit protein eL34 (120 aa).

Belongs to the eukaryotic ribosomal protein eL34 family.

The protein is Large ribosomal subunit protein eL34 (RPL34) of Nicotiana tabacum (Common tobacco).